The primary structure comprises 299 residues: HTH-type transcriptional regulator ArgP (299 aa).

The region spanning Pro4 to Thr60 is the HTH lysR-type domain. The H-T-H motif DNA-binding region spans Phe21–Lys40.

The protein belongs to the LysR transcriptional regulatory family. As to quaternary structure, homodimer.

Functionally, controls the transcription of genes involved in arginine and lysine metabolism. The polypeptide is HTH-type transcriptional regulator ArgP (Erwinia tasmaniensis (strain DSM 17950 / CFBP 7177 / CIP 109463 / NCPPB 4357 / Et1/99)).